A 413-amino-acid polypeptide reads, in one-letter code: Docking protein 2 (413 aa).

Residues 4–114 (VVVKQGFLYL…WIQAICLLAF (111 aa)) form the PH domain. In terms of domain architecture, IRS-type PTB spans 147–252 (PQKEFAVTVR…SAQKNAAPPG (106 aa)). A disordered region spans residues 247–292 (NAAPPGPQTQPVPVPAVLPRPESPYARPHDSLPPPSPTVPVPTPRQ). A compositionally biased stretch (pro residues) spans 250–268 (PPGPQTQPVPVPAVLPRPE). Tyr-271 is modified (phosphotyrosine). Residues 277–289 (SLPPPSPTVPVPT) are compositionally biased toward pro residues. 2 positions are modified to phosphotyrosine: Tyr-300 and Tyr-346. A compositionally biased stretch (basic and acidic residues) spans 362 to 381 (QEPRGEAWRRQATADRDSSG). Residues 362 to 383 (QEPRGEAWRRQATADRDSSGLK) form a disordered region.

Belongs to the DOK family. Type A subfamily. As to quaternary structure, interacts with phosphorylated RASGAP and EGFR. Interacts with RET and NCK. Interacts (via PH domain) with TEK/TIE2 (tyrosine phosphorylated). Post-translationally, on immunoreceptor stimulation, phosphorylated on C-terminal tyrosine residues. Phosphorylation on Tyr-346 is required for binding to the SH2 domain of NCK. Phosphorylation on both Tyr-271 and Tyr-300 is required for interaction with RASGAP. Phosphorylated on tyrosine residues by TEK/TIE2.

Its function is as follows. DOK proteins are enzymatically inert adaptor or scaffolding proteins. They provide a docking platform for the assembly of multimolecular signaling complexes. DOK2 may modulate the cellular proliferation induced by IL-4, as well as IL-2 and IL-3. May be involved in modulating Bcr-Abl signaling. Attenuates EGF-stimulated MAP kinase activation. The sequence is that of Docking protein 2 (DOK2) from Bos taurus (Bovine).